The primary structure comprises 338 residues: Protein RecA (338 aa).

Gly-66 to Thr-73 provides a ligand contact to ATP.

Belongs to the RecA family.

It localises to the cytoplasm. Its function is as follows. Can catalyze the hydrolysis of ATP in the presence of single-stranded DNA, the ATP-dependent uptake of single-stranded DNA by duplex DNA, and the ATP-dependent hybridization of homologous single-stranded DNAs. It interacts with LexA causing its activation and leading to its autocatalytic cleavage. The chain is Protein RecA from Geobacter sulfurreducens (strain ATCC 51573 / DSM 12127 / PCA).